A 312-amino-acid polypeptide reads, in one-letter code: tRNA pseudouridine synthase B (312 aa).

The Nucleophile role is filled by aspartate 38.

Belongs to the pseudouridine synthase TruB family. Type 1 subfamily.

It catalyses the reaction uridine(55) in tRNA = pseudouridine(55) in tRNA. In terms of biological role, responsible for synthesis of pseudouridine from uracil-55 in the psi GC loop of transfer RNAs. In Syntrophus aciditrophicus (strain SB), this protein is tRNA pseudouridine synthase B.